We begin with the raw amino-acid sequence, 121 residues long: Neuromedin-B (121 aa).

A signal peptide spans M1–A24. The residue at position 56 (M56) is a Methionine amide. A propeptide spanning residues S60–K121 is cleaved from the precursor.

Belongs to the bombesin/neuromedin-B/ranatensin family. Higher expression in the central nervous system (CNS) than in peripheral tissues. Highest levels are found in the olfactory bulb. Relatively high levels in the CNS (including the cerebral cortex, cerebellum, spinal cord, medulla oblongata, midbrain, hypothalamus, hippocampus, and hypophysis) and in peripheral tissues such as the pancreas, adrenal gland, testis, ovary and cecum. Moderate levels are found in the rectum, heart and pons with low expression levels detected in the bone marrow and duodenum. Other tissues show no or low levels of expression.

It is found in the secreted. Its subcellular location is the cell projection. It localises to the neuron projection. In terms of biological role, stimulates smooth muscle contraction. Induces sighing by acting directly on the pre-Botzinger complex, a cluster of several thousand neurons in the ventrolateral medulla responsible for inspiration during respiratory activity. Contributes to the induction of sneezing following exposure to chemical irritants or allergens which causes release of NMB by nasal sensory neurons and activation of NMBR-expressing neurons in the sneeze-evoking region of the brainstem. These in turn activate neurons of the caudal ventral respiratory group, giving rise to the sneezing response. Contributes to induction of acute itch, possibly through activation of the NMBR receptor on dorsal root ganglion neurons. Increases expression of NMBR and steroidogenic mediators STAR, CYP11A1 and HSD3B1 in Leydig cells, induces secretion of testosterone by Leydig cells and also promotes Leydig cell proliferation. Plays a role in the innate immune response to influenza A virus infection by enhancing interferon alpha expression and reducing expression of IL6. Plays a role in CSF1-induced proliferation of osteoclast precursors by contributing to positive regulation of the expression of the CSF1 receptor CSF1R. The sequence is that of Neuromedin-B (NMB) from Sus scrofa (Pig).